A 911-amino-acid polypeptide reads, in one-letter code: MSAAMTAEVCEDHTKPMLMLLDGNSLAFRAFYALPTENFKTRGGLTTNAVYGFTAMLINLLREEAPTHIAAAFDVSRKTFRSECYAGYKANRSSIPAEFHGQIDITKEVLGALGITVFAEAGFEADDLIATLATQAENEGYRVLVVTGDRDALQLVSNDVTVLYPRKGVSELTRFTPEAVIEKYGVTPAQYPDLAALRGDPSDNLPGIPGVGEKTAAKWIVDYGSLQGLVDNVESVRGKVGEALRTHLASVVRNRELTELVKDVPLVQTSDTLRLQPWDRDRIHRLFDNLEFRVLRDRLFEALAAAGERVPEVDEGFDVRGGLLESGTVGRWLAKHADDGRRSGLAIVGTHLPHGGDATALAVAAADGNGGYIDTAMLTPDDDDALAAWLADPDNPKALHEAKLAMHDLAGRGWTLGGITSDTALAAYLVRPGQRSFTLDDLSLRYLRRELRAETPEQEQFSLLDNVDEVDKQAIQTLILRARAVVDLAAALDAELDLIDSTSLLGEMELPVQQVLADMEKAGIAADLRLLTELQSQFGDQIRDAAEAAYAVIGKQINLSSPKQLQVVLFEELGMPKTKRTKTGYTTDADALQSLFCKTEHPFLQHLLTHRDVTRLKVTVDGLLNAVAADGRIHTTFNQTIATTGRLSSTEPNLQNIPIRTNAGRQIRDAFVVGSENNGYTELMTADYSQIEMRIMAHLSRDEGLIEAFHTGEDLHSFVASRAFGIPIEDITPELRRRVKAMSYGLAYGLSAYGLATQLKISTEEAKLQMEQYFARFGGVRDYLMDVVEQARKDGYTSTVLGRRRYLPELDSSNRQIREAAERAALNAPIQGSAADIIKVAMIAVDKSLKQAKLASRMLLQVHDELLFEVAIGEREQIEAMVREQMGSAYPLDVPLEVSVGFGRSWGAAAH.

The 5'-3' exonuclease domain occupies 186–280 (VTPAQYPDLA…DTLRLQPWDR (95 aa)). Positions 320–497 (RGGLLESGTV…LAAALDAELD (178 aa)) constitute a 3'-5' exonuclease domain.

Belongs to the DNA polymerase type-A family. Single-chain monomer with multiple functions.

The catalysed reaction is DNA(n) + a 2'-deoxyribonucleoside 5'-triphosphate = DNA(n+1) + diphosphate. In addition to polymerase activity, this DNA polymerase exhibits 3'-5' and 5'-3' exonuclease activity. This chain is DNA polymerase I (polA), found in Mycobacterium leprae (strain TN).